A 389-amino-acid chain; its full sequence is MTMKMSYRKSNIYLSLVNSYMIDSPQPSSINYWWNMGSLLGLCLVIQICTGIFLAMHYSSNIELAFSSVEHIMRDVQYGWLIRYMHANGASFFFMCMYTHIAKGLYYGSYKSPRVTVWTVGVIIFVLTMAAAFLGYCCVYGQMSHWGATVITNLFSAIPFIGKDIVLWLWGGFSVSNPTIQRFFAFHYLVPFIIAAVVIMHMMALHTHGSSNPLGITGNLDRIPMHGYFVFKDLITVFVFMILFSLFVFYSPNTLGHPDNYIPGNPLVTPASIVPEWYLLPFYAILRSIPDKLLGVITMFAAILVLLVLPITDRSVVRGNSFKVLSKFFFFIFVFNFVLLGIIGMQHVEVPFVLIGQISTGIYFAYFIIIVPVISMIENVLFYIGRVSK.

The next 4 helical transmembrane spans lie at 36–56 (MGSL…FLAM), 80–102 (WLIR…THIA), 117–137 (VWTV…LGYC), and 183–203 (FFAF…MHMM). 2 residues coordinate heme b: H86 and H100. Residues H187 and H201 each contribute to the heme b site. H206 serves as a coordination point for a ubiquinone. 4 consecutive transmembrane segments (helical) span residues 229 to 249 (FVFK…LFVF), 293 to 313 (LLGV…PITD), 325 to 345 (LSKF…IIGM), and 352 to 372 (FVLI…IIVP).

This sequence belongs to the cytochrome b family. In terms of assembly, fungal cytochrome b-c1 complex contains 10 subunits; 3 respiratory subunits, 2 core proteins and 5 low-molecular weight proteins. Cytochrome b-c1 complex is a homodimer. Heme b serves as cofactor.

Its subcellular location is the mitochondrion inner membrane. Component of the ubiquinol-cytochrome c reductase complex (complex III or cytochrome b-c1 complex) that is part of the mitochondrial respiratory chain. The b-c1 complex mediates electron transfer from ubiquinol to cytochrome c. Contributes to the generation of a proton gradient across the mitochondrial membrane that is then used for ATP synthesis. The protein is Cytochrome b (COB) of Vanderwaltozyma polyspora (strain ATCC 22028 / DSM 70294 / BCRC 21397 / CBS 2163 / NBRC 10782 / NRRL Y-8283 / UCD 57-17) (Kluyveromyces polysporus).